We begin with the raw amino-acid sequence, 138 residues long: MLSPKKVKYRKKQRGRLSGEAHKGNKISFGEYGLVSLDTYFITARQIEAARVAMTRRVKRGGKVWIRIFPDVPYTKKPAETRMGKGKGGVDHWNAPVKIGTVMFEMAGVPRELAEAAMMLASSKLPVKTTFVVRRDLR.

Residues Met-1–Gly-15 show a composition bias toward basic residues. The tract at residues Met-1–Glu-20 is disordered.

This sequence belongs to the universal ribosomal protein uL16 family. In terms of assembly, part of the 50S ribosomal subunit.

In terms of biological role, binds 23S rRNA and is also seen to make contacts with the A and possibly P site tRNAs. The polypeptide is Large ribosomal subunit protein uL16 (Borrelia hermsii (strain HS1 / DAH)).